The chain runs to 342 residues: Galactose mutarotase (342 aa).

Ala-2 carries the post-translational modification N-acetylalanine. Ser-14 is subject to Phosphoserine. Residues 81–82 and His-107 contribute to the beta-D-galactose site; that span reads NR. At Ser-124 the chain carries Phosphoserine. Residue His-176 is the Proton donor of the active site. Residues 176–178, Asp-243, Gln-279, and Glu-307 contribute to the beta-D-galactose site; that span reads HSY. The Proton acceptor role is filled by Glu-307.

Belongs to the aldose epimerase family. In terms of assembly, monomer.

It is found in the cytoplasm. It carries out the reaction alpha-D-galactose = beta-D-galactose. It catalyses the reaction alpha-D-glucose = beta-D-glucose. It functions in the pathway carbohydrate metabolism; hexose metabolism. The protein operates within carbohydrate metabolism; galactose metabolism. Mutarotase that catalyzes the interconversion of beta-D-galactose and alpha-D-galactose during galactose metabolism. Beta-D-galactose is metabolized in the liver into glucose 1-phosphate, the primary metabolic fuel, by the action of four enzymes that constitute the Leloir pathway: GALM, GALK1 (galactokinase), GALT (galactose-1-phosphate uridylyltransferase) and GALE (UDP-galactose-4'-epimerase). Involved in the maintenance of the equilibrium between the beta- and alpha-anomers of galactose, therefore ensuring a sufficient supply of the alpha-anomer for GALK1. Also active on D-glucose although shows a preference for galactose over glucose. This Pongo abelii (Sumatran orangutan) protein is Galactose mutarotase (GALM).